Here is a 480-residue protein sequence, read N- to C-terminus: Ribosomal RNA small subunit methyltransferase F (480 aa).

Residues 125 to 131 (AAAPGSK), Glu149, Asp176, and Asp194 contribute to the S-adenosyl-L-methionine site. The active-site Nucleophile is Cys247.

It belongs to the class I-like SAM-binding methyltransferase superfamily. RsmB/NOP family.

The protein resides in the cytoplasm. The catalysed reaction is cytidine(1407) in 16S rRNA + S-adenosyl-L-methionine = 5-methylcytidine(1407) in 16S rRNA + S-adenosyl-L-homocysteine + H(+). Functionally, specifically methylates the cytosine at position 1407 (m5C1407) of 16S rRNA. In Enterobacter sp. (strain 638), this protein is Ribosomal RNA small subunit methyltransferase F.